The following is a 214-amino-acid chain: Phosphoenolpyruvate guanylyltransferase (214 aa).

Residues threonine 148, glycine 163, and serine 166 each contribute to the phosphoenolpyruvate site.

The protein belongs to the CofC family.

The enzyme catalyses phosphoenolpyruvate + GTP + H(+) = enolpyruvoyl-2-diphospho-5'-guanosine + diphosphate. Its pathway is cofactor biosynthesis; coenzyme F420 biosynthesis. Its function is as follows. Guanylyltransferase that catalyzes the activation of phosphoenolpyruvate (PEP) as enolpyruvoyl-2-diphospho-5'-guanosine, via the condensation of PEP with GTP. It is involved in the biosynthesis of coenzyme F420, a hydride carrier cofactor. The sequence is that of Phosphoenolpyruvate guanylyltransferase from Mycolicibacterium gilvum (strain PYR-GCK) (Mycobacterium gilvum (strain PYR-GCK)).